The sequence spans 189 residues: Putative manganese efflux pump MntP (189 aa).

Transmembrane regions (helical) follow at residues Leu3 to Gly23, Leu41 to Ala61, Ile65 to Ile85, Gly103 to Val123, Ile132 to Met152, and Ile167 to Tyr187.

The protein belongs to the MntP (TC 9.B.29) family.

It is found in the cell inner membrane. Probably functions as a manganese efflux pump. The chain is Putative manganese efflux pump MntP from Serratia proteamaculans (strain 568).